The primary structure comprises 937 residues: Beta-mannosidase A (937 aa).

A signal peptide spans 1-23 (MRALPTTATTLLGVLFFPSASRS). N-linked (GlcNAc...) asparagine glycans are attached at residues N42, N82, N250, N285, N319, N329, and N350. E482 (proton donor) is an active-site residue. Residues N553, N612, N743, and N796 are each glycosylated (N-linked (GlcNAc...) asparagine).

The protein belongs to the glycosyl hydrolase 2 family. Beta-mannosidase A subfamily. In terms of assembly, homodimer. N-glycosylated.

The protein localises to the secreted. The enzyme catalyses Hydrolysis of terminal, non-reducing beta-D-mannose residues in beta-D-mannosides.. Its pathway is glycan metabolism; N-glycan degradation. Functionally, exoglycosidase that cleaves the single beta-linked mannose residue from the non-reducing end of beta-mannosidic oligosaccharides of various complexity and length. Involved in the degradation of polymeric mannan and galactomannan. Releases the terminal mannose residue from mannotriose and is somewaht less active on other mannooligosaccharides. The polypeptide is Beta-mannosidase A (mndA) (Aspergillus aculeatus).